A 156-amino-acid polypeptide reads, in one-letter code: ATP synthase subunit b (156 aa).

Residues 11 to 31 (AIAFVLFVLFCMKYVWPPLMA) form a helical membrane-spanning segment.

It belongs to the ATPase B chain family. As to quaternary structure, F-type ATPases have 2 components, F(1) - the catalytic core - and F(0) - the membrane proton channel. F(1) has five subunits: alpha(3), beta(3), gamma(1), delta(1), epsilon(1). F(0) has three main subunits: a(1), b(2) and c(10-14). The alpha and beta chains form an alternating ring which encloses part of the gamma chain. F(1) is attached to F(0) by a central stalk formed by the gamma and epsilon chains, while a peripheral stalk is formed by the delta and b chains.

The protein resides in the cell inner membrane. Functionally, f(1)F(0) ATP synthase produces ATP from ADP in the presence of a proton or sodium gradient. F-type ATPases consist of two structural domains, F(1) containing the extramembraneous catalytic core and F(0) containing the membrane proton channel, linked together by a central stalk and a peripheral stalk. During catalysis, ATP synthesis in the catalytic domain of F(1) is coupled via a rotary mechanism of the central stalk subunits to proton translocation. In terms of biological role, component of the F(0) channel, it forms part of the peripheral stalk, linking F(1) to F(0). This Sodalis glossinidius (strain morsitans) protein is ATP synthase subunit b.